A 513-amino-acid polypeptide reads, in one-letter code: Serine/threonine protein phosphatase 2A 55 kDa regulatory subunit B alpha isoform (513 aa).

M1 carries the N-acetylmethionine modification. WD repeat units lie at residues 36–75 (QEVD…NSSG), 112–153 (EIEE…IKKI), 232–270 (AHDY…QSFN), 281–321 (DLSE…LCDS), 340–378 (EIIA…GPVA), and 483–513 (DYTT…MYYA).

The protein belongs to the phosphatase 2A regulatory subunit B family. In terms of assembly, PP2A consists of a common heteromeric enzyme, composed of a catalytic subunit (subunits C), a constant regulatory subunit (subunit A), and a variety of regulatory subunits such as subunits B (the R2/B/PR55/B55, R3/B''/PR72/PR130/PR59 and R5/B'/B56 families). Interacts with SIC/RON3. In terms of tissue distribution, expressed ubiquitously.

The B regulatory subunit may modulate substrate selectivity and catalytic activity, and may also direct the localization of the catalytic enzyme to a particular subcellular compartment. This chain is Serine/threonine protein phosphatase 2A 55 kDa regulatory subunit B alpha isoform (PP2AB1), found in Arabidopsis thaliana (Mouse-ear cress).